Consider the following 142-residue polypeptide: Large ribosomal subunit protein uL13 (142 aa).

It belongs to the universal ribosomal protein uL13 family. As to quaternary structure, part of the 50S ribosomal subunit.

Functionally, this protein is one of the early assembly proteins of the 50S ribosomal subunit, although it is not seen to bind rRNA by itself. It is important during the early stages of 50S assembly. The protein is Large ribosomal subunit protein uL13 of Azotobacter vinelandii (strain DJ / ATCC BAA-1303).